The following is a 29-amino-acid chain: Ranatuerin-2SEa (29 aa).

C23 and C29 form a disulfide bridge.

As to expression, expressed by the skin glands.

It is found in the secreted. Its function is as follows. Mast cell degranulating peptide. Causes histamine release from rat peritoneal mast cells in vitro. Has antibacterial activity against the Gram-negative bacterium E.coli K12 and Gram-positive bacterium M.luteus NCT C2665. In Lithobates sevosus (Dusky gopher frog), this protein is Ranatuerin-2SEa.